The primary structure comprises 428 residues: Enolase (428 aa).

Q162 serves as a coordination point for (2R)-2-phosphoglycerate. The Proton donor role is filled by E204. The Mg(2+) site is built by D241, E283, and D310. (2R)-2-phosphoglycerate contacts are provided by K335, R364, S365, and K386. K335 (proton acceptor) is an active-site residue.

It belongs to the enolase family. Requires Mg(2+) as cofactor.

It is found in the cytoplasm. It localises to the secreted. Its subcellular location is the cell surface. It catalyses the reaction (2R)-2-phosphoglycerate = phosphoenolpyruvate + H2O. The protein operates within carbohydrate degradation; glycolysis; pyruvate from D-glyceraldehyde 3-phosphate: step 4/5. Functionally, catalyzes the reversible conversion of 2-phosphoglycerate (2-PG) into phosphoenolpyruvate (PEP). It is essential for the degradation of carbohydrates via glycolysis. The sequence is that of Enolase from Nocardia farcinica (strain IFM 10152).